A 163-amino-acid polypeptide reads, in one-letter code: MSQFNQNNKQIDVMGIRKILPHRYPFALLDKIVDWSVEDRTIVAQKNVTINEDFFNGHFPDFPVMPGVLIVEAMAQATAILGELMAETLFAHVVEKAGGGRRTFMLAGIDKVRVKRPVVPGDVLVIESRMVKQKNIICTAESVAKVDGQIVCSAELMAAYKDY.

Histidine 58 is an active-site residue.

It belongs to the thioester dehydratase family. FabZ subfamily.

It is found in the cytoplasm. It carries out the reaction a (3R)-hydroxyacyl-[ACP] = a (2E)-enoyl-[ACP] + H2O. In terms of biological role, involved in unsaturated fatty acids biosynthesis. Catalyzes the dehydration of short chain beta-hydroxyacyl-ACPs and long chain saturated and unsaturated beta-hydroxyacyl-ACPs. This Francisella tularensis subsp. tularensis (strain FSC 198) protein is 3-hydroxyacyl-[acyl-carrier-protein] dehydratase FabZ.